Reading from the N-terminus, the 249-residue chain is Orotidine 5'-phosphate decarboxylase (249 aa).

Substrate is bound by residues aspartate 18, lysine 40, 67 to 76 (DLKYHDIPNT), threonine 127, arginine 188, glutamine 197, glycine 217, and arginine 218. Catalysis depends on lysine 69, which acts as the Proton donor.

The protein belongs to the OMP decarboxylase family. Type 1 subfamily. As to quaternary structure, homodimer.

It carries out the reaction orotidine 5'-phosphate + H(+) = UMP + CO2. It functions in the pathway pyrimidine metabolism; UMP biosynthesis via de novo pathway; UMP from orotate: step 2/2. In terms of biological role, catalyzes the decarboxylation of orotidine 5'-monophosphate (OMP) to uridine 5'-monophosphate (UMP). The sequence is that of Orotidine 5'-phosphate decarboxylase from Baumannia cicadellinicola subsp. Homalodisca coagulata.